A 141-amino-acid chain; its full sequence is Ribonuclease VapC2 (141 aa).

In terms of domain architecture, PINc spans 7-129 (LIDKSALVRL…FDAIAALTGQ (123 aa)). Positions 99, 117, and 119 each coordinate Mg(2+).

It belongs to the PINc/VapC protein family. As to quaternary structure, probably active as a homodimer. The cofactor is Mg(2+).

Toxic component of a type II toxin-antitoxin (TA) system. Acts as an RNase. All its toxic effects are neutralized by coexpression with cognate antitoxin VapB2. The sequence is that of Ribonuclease VapC2 from Mycobacterium tuberculosis (strain CDC 1551 / Oshkosh).